A 113-amino-acid polypeptide reads, in one-letter code: Iron-sulfur cluster insertion protein ErpA (113 aa).

Iron-sulfur cluster contacts are provided by Cys-41, Cys-105, and Cys-107.

This sequence belongs to the HesB/IscA family. As to quaternary structure, homodimer. Requires iron-sulfur cluster as cofactor.

In terms of biological role, required for insertion of 4Fe-4S clusters for at least IspG. This is Iron-sulfur cluster insertion protein ErpA from Aliivibrio fischeri (strain ATCC 700601 / ES114) (Vibrio fischeri).